We begin with the raw amino-acid sequence, 251 residues long: Ubiquinone/menaquinone biosynthesis C-methyltransferase UbiE (251 aa).

S-adenosyl-L-methionine contacts are provided by residues Thr-74, Asp-95, 123–124 (NA), and Ser-140.

This sequence belongs to the class I-like SAM-binding methyltransferase superfamily. MenG/UbiE family.

The catalysed reaction is a 2-demethylmenaquinol + S-adenosyl-L-methionine = a menaquinol + S-adenosyl-L-homocysteine + H(+). It carries out the reaction a 2-methoxy-6-(all-trans-polyprenyl)benzene-1,4-diol + S-adenosyl-L-methionine = a 5-methoxy-2-methyl-3-(all-trans-polyprenyl)benzene-1,4-diol + S-adenosyl-L-homocysteine + H(+). It functions in the pathway quinol/quinone metabolism; menaquinone biosynthesis; menaquinol from 1,4-dihydroxy-2-naphthoate: step 2/2. The protein operates within cofactor biosynthesis; ubiquinone biosynthesis. Functionally, methyltransferase required for the conversion of demethylmenaquinol (DMKH2) to menaquinol (MKH2) and the conversion of 2-polyprenyl-6-methoxy-1,4-benzoquinol (DDMQH2) to 2-polyprenyl-3-methyl-6-methoxy-1,4-benzoquinol (DMQH2). This Yersinia pestis bv. Antiqua (strain Antiqua) protein is Ubiquinone/menaquinone biosynthesis C-methyltransferase UbiE.